We begin with the raw amino-acid sequence, 688 residues long: DNA ligase (688 aa).

NAD(+) contacts are provided by residues 51-55 (DSEYD), 100-101 (SL), and E129. K131 functions as the N6-AMP-lysine intermediate in the catalytic mechanism. NAD(+) contacts are provided by R152, E189, K308, and K332. Positions 426, 429, 444, and 450 each coordinate Zn(2+). A BRCT domain is found at 609–688 (ADEQPLKGQT…DELLALLANS (80 aa)).

Belongs to the NAD-dependent DNA ligase family. LigA subfamily. Requires Mg(2+) as cofactor. It depends on Mn(2+) as a cofactor.

The catalysed reaction is NAD(+) + (deoxyribonucleotide)n-3'-hydroxyl + 5'-phospho-(deoxyribonucleotide)m = (deoxyribonucleotide)n+m + AMP + beta-nicotinamide D-nucleotide.. DNA ligase that catalyzes the formation of phosphodiester linkages between 5'-phosphoryl and 3'-hydroxyl groups in double-stranded DNA using NAD as a coenzyme and as the energy source for the reaction. It is essential for DNA replication and repair of damaged DNA. In Shewanella sp. (strain MR-7), this protein is DNA ligase.